Here is a 535-residue protein sequence, read N- to C-terminus: Succinate-semialdehyde dehydrogenase, mitochondrial (535 aa).

The transit peptide at 1–47 (MATCIWLRSCGARRLGSTFPGCRLRPRAGGLVPASGPAPGPAQLRCY) directs the protein to the mitochondrion. N6-acetyllysine; alternate is present on lysine 126. Lysine 126 carries the post-translational modification N6-succinyllysine; alternate. N6-succinyllysine is present on residues lysine 135 and lysine 184. NAD(+)-binding positions include arginine 213 and 228-231 (KPAE). Arginine 213 serves as a coordination point for substrate. Lysine 265 bears the N6-acetyllysine; alternate mark. Lysine 265 is subject to N6-succinyllysine; alternate. 284–289 (GSTTTG) is a binding site for NAD(+). Glutamate 306 functions as the Proton acceptor in the catalytic mechanism. Arginine 334 is a binding site for substrate. Cysteine 340 functions as the Nucleophile in the catalytic mechanism. A disulfide bridge connects residues cysteine 340 and cysteine 342. The residue at position 365 (lysine 365) is an N6-acetyllysine. At lysine 402 the chain carries N6-succinyllysine. Position 411 is an N6-acetyllysine (lysine 411). Serine 498 serves as a coordination point for substrate. Serine 499 carries the post-translational modification Phosphoserine.

Belongs to the aldehyde dehydrogenase family. In terms of assembly, homotetramer.

The protein localises to the mitochondrion. The enzyme catalyses succinate semialdehyde + NAD(+) + H2O = succinate + NADH + 2 H(+). The protein operates within amino-acid degradation; 4-aminobutanoate degradation. Redox-regulated. Inhibited under oxydizing conditions. Functionally, catalyzes one step in the degradation of the inhibitory neurotransmitter gamma-aminobutyric acid (GABA). In Pan troglodytes (Chimpanzee), this protein is Succinate-semialdehyde dehydrogenase, mitochondrial (ALDH5A1).